The primary structure comprises 417 residues: NADH-quinone oxidoreductase subunit D (417 aa).

This sequence belongs to the complex I 49 kDa subunit family. NDH-1 is composed of 14 different subunits. Subunits NuoB, C, D, E, F, and G constitute the peripheral sector of the complex.

It is found in the cell inner membrane. It carries out the reaction a quinone + NADH + 5 H(+)(in) = a quinol + NAD(+) + 4 H(+)(out). NDH-1 shuttles electrons from NADH, via FMN and iron-sulfur (Fe-S) centers, to quinones in the respiratory chain. The immediate electron acceptor for the enzyme in this species is believed to be ubiquinone. Couples the redox reaction to proton translocation (for every two electrons transferred, four hydrogen ions are translocated across the cytoplasmic membrane), and thus conserves the redox energy in a proton gradient. In Halorhodospira halophila (strain DSM 244 / SL1) (Ectothiorhodospira halophila (strain DSM 244 / SL1)), this protein is NADH-quinone oxidoreductase subunit D.